The primary structure comprises 576 residues: Alpha-1,3-arabinosyltransferase XAT3 (576 aa).

Residues 1-19 are Cytoplasmic-facing; sequence MKAGERPKLVRGVRQESRR. Residues 20–40 traverse the membrane as a helical; Signal-anchor for type II membrane protein segment; it reads FRLLVIVVGFFLVSLTFVFVS. Topologically, residues 41-576 are lumenal; sequence KPDAILFSLN…LLEALDNLNP (536 aa). The disordered stretch occupies residues 64-171; it reads IQQKVNEPSG…KHKVTLPTVS (108 aa). Basic and acidic residues-rich tracts occupy residues 73 to 98, 126 to 138, and 147 to 163; these read GESR…DAKP, THNK…KSHQ, and GESK…EQKH. N172, N375, and N443 each carry an N-linked (GlcNAc...) asparagine glycan.

The protein belongs to the glycosyltransferase 61 family.

Its subcellular location is the golgi apparatus membrane. Its pathway is glycan metabolism. Glycosyltransferase involved in the arabinosylation of xylan, the major hemicellulose (non-cellulosic component) of primary and secondary walls of angiosperms. Possesses alpha-1,3-arabinosyltransferase activity, transferring an arabinofuranose residue to the xylan backbone. The polypeptide is Alpha-1,3-arabinosyltransferase XAT3 (Oryza sativa subsp. japonica (Rice)).